The following is a 155-amino-acid chain: Ribosome maturation factor RimP (155 aa).

This sequence belongs to the RimP family.

It is found in the cytoplasm. Functionally, required for maturation of 30S ribosomal subunits. The chain is Ribosome maturation factor RimP from Bacteroides fragilis (strain ATCC 25285 / DSM 2151 / CCUG 4856 / JCM 11019 / LMG 10263 / NCTC 9343 / Onslow / VPI 2553 / EN-2).